We begin with the raw amino-acid sequence, 205 residues long: Proteasome subunit beta type-3 (205 aa).

Belongs to the peptidase T1B family. In terms of assembly, the 26S proteasome consists of a 20S proteasome core and two 19S regulatory subunits. The 20S proteasome core is composed of 28 subunits that are arranged in four stacked rings, resulting in a barrel-shaped structure. The two end rings are each formed by seven alpha subunits, and the two central rings are each formed by seven beta subunits. The catalytic chamber with the active sites is on the inside of the barrel.

The protein localises to the cytoplasm. It is found in the nucleus. Its function is as follows. Non-catalytic component of the proteasome, a multicatalytic proteinase complex which is characterized by its ability to cleave peptides with Arg, Phe, Tyr, Leu, and Glu adjacent to the leaving group at neutral or slightly basic pH. The proteasome has an ATP-dependent proteolytic activity. The sequence is that of Proteasome subunit beta type-3 (psmb3) from Oncorhynchus mykiss (Rainbow trout).